Here is a 1117-residue protein sequence, read N- to C-terminus: Sodium-driven chloride bicarbonate exchanger (1117 aa).

2 disordered regions span residues 1 to 23 (MEIK…EEAV) and 58 to 97 (GRKS…TPSQ). The Cytoplasmic portion of the chain corresponds to 1-508 (MEIKDQGAQM…DFRDAFSLQC (508 aa)). Over residues 59-76 (RKSHRRHRHRGHKHRKRD) the composition is skewed to basic residues. Ser-89 carries the post-translational modification Phosphoserine. Thr-94 carries the post-translational modification Phosphothreonine. Ser-275 is modified (phosphoserine). 2 disordered regions span residues 282–309 (DFSK…KGPP) and 431–476 (WDPS…PELQ). Residues 509–529 (LASFLFLYCACMSPVITFGGL) traverse the membrane as a helical segment. The Extracellular portion of the chain corresponds to 530–537 (LGEATEGR). The chain crosses the membrane as a helical span at residues 538-558 (ISAIESLFGASMTGIAYSLFG). At 559–561 (GQP) the chain is on the cytoplasmic side. Residues 562-582 (LTILGSTGPVLVFEKILFKFC) form a helical membrane-spanning segment. Residues 583 to 595 (KEYGLSYLSLRAS) are Extracellular-facing. Residues 596-616 (IGLWTATLCIILVATDASSLV) form a helical membrane-spanning segment. Residues 617–625 (CYITRFTEE) lie on the Cytoplasmic side of the membrane. Residues 626–646 (AFASLICIIFIYEALEKLFEL) form a helical membrane-spanning segment. Residues 647 to 719 (SESYPINMHN…VGRACGHGHP (73 aa)) are Extracellular-facing. N-linked (GlcNAc...) asparagine glycosylation is found at Asn-676, Asn-686, and Asn-696. The chain crosses the membrane as a helical span at residues 720–740 (YVPDVLFWSVILFFSTVTMSA). Topologically, residues 741–761 (TLKQFKTSRYFPTKVRSIVSD) are cytoplasmic. Residues 762 to 782 (FAVFLTILCMVLIDYAIGIPS) form a helical membrane-spanning segment. The Extracellular segment spans residues 783–808 (PKLQVPSVFKPTRDDRGWFVTPLGPN). The chain crosses the membrane as a helical span at residues 809-829 (PWWTIIAAIIPALLCTILIFM). The Cytoplasmic segment spans residues 830–854 (DQQITAVIINRKEHKLKKGCGYHLD). Residues 855 to 875 (LLMVAVMLGVCSIMGLPWFVA) form a helical membrane-spanning segment. Residues 876–911 (ATVLSITHVNSLKLESECSAPGEQPKFLGIREQRVT) lie on the Extracellular side of the membrane. The chain crosses the membrane as a helical span at residues 912–932 (GLMIFILMGSSVFMTSILKFI). The Cytoplasmic portion of the chain corresponds to 933–934 (PM). Residues 935–955 (PVLYGVFLYMGASSLKGIQLF) traverse the membrane as a helical segment. Residues 956–997 (DRIKLFWMPAKHQPDFIYLRHVPLRKVHLFTVIQMSCLGLLW) are Extracellular-facing. The helical transmembrane segment at 998–1018 (IIKVSRAAIVFPMMVLALVFV) threads the bilayer. At 1019-1117 (RKLMDFLFTK…SRFPSKSSPS (99 aa)) the chain is on the cytoplasmic side. A phosphoserine mark is found at Ser-1056 and Ser-1084.

It belongs to the anion exchanger (TC 2.A.31) family. In terms of processing, N-glycosylated. In the brain, detected in cerebral cortex, subcortex, cerebellum, hippocampus and medulla (at protein level). Expressed in neurons but not in astrocytes (at protein level). Isoforms starting with Met-Glu-Ile-Lys are found predominantly in the brain with lower levels in the eye while isoforms starting with Met-Cys-Asp-Leu are most abundant in the kidney with lower levels in the duodenum, jejunum and ileum (at protein level). In the kidney, isoforms starting with Met-Cys-Asp-Leu are primarily expressed in the cortex, the outer stripe of the outer medulla and the inner stripe of the outer medulla (ISOM) but are not detectable in the inner medulla (IM) while isoforms starting with Met-Glu-Ile-Lys are predominantly expressed in the ISOM and IM. Expressed in the brain, in the hippocampus as well as in dentate gyrus, cortical layers, cerebellum, olfactory bulb and in the epithelial cells of the choroid plexus. Detected in pituitary, testis, kidney and ileum. Detected also in spleen and lung. In terms of tissue distribution, mainly expressed in the jejenum (at protein level).

The protein resides in the basolateral cell membrane. Its subcellular location is the apical cell membrane. The protein localises to the cell projection. It localises to the dendrite. It is found in the axon. The protein resides in the perikaryon. Its subcellular location is the presynapse. The protein localises to the postsynapse. It carries out the reaction 2 hydrogencarbonate(out) + chloride(in) + Na(+)(out) = 2 hydrogencarbonate(in) + chloride(out) + Na(+)(in). Functionally, sodium/bicarbonate cotransporter which plays an important role in regulating intracellular pH. Has been shown to act as a sodium/bicarbonate cotransporter in exchange for intracellular chloride. Has also been shown to act as a sodium/biocarbonate cotransporter which does not couple net influx of bicarbonate to net efflux of chloride, with the observed chloride efflux being due to chloride self-exchange. Controls neuronal pH and may contribute to the secretion of cerebrospinal fluid. Acting on presynaptic intracellular pH, it promotes GABA release, reduces the excitability of CA1 pyramidal neurons, and modulates short-term synaptic plasticity. Required in retinal cells to maintain normal pH which is necessary for normal vision. In the kidney, likely to mediate bicarbonate reclamation in the apical membrane of the proximal tubules. Sodium/bicarbonate cotransporter which mediates cotransport of sodium and bicarbonate in association with an efflux of intracellular chloride and is involved in NaCl absorption in the small intestine. This Rattus norvegicus (Rat) protein is Sodium-driven chloride bicarbonate exchanger.